The primary structure comprises 106 residues: uncharacterized protein (106 aa).

It is found in the mitochondrion. This is an uncharacterized protein from Arabidopsis thaliana (Mouse-ear cress).